Here is a 225-residue protein sequence, read N- to C-terminus: MSIVSRTVTITISVKKLITYIELRYGMESSTCPFCQSGTLISLAAVFFCHSGMEALLSIVCSLAFFHAGTALSSLLASLPFSFSLSLSSCMPILARISDADGIVSMPGIPLGDMENNLLSCALPDSIRLFIKLFRDSISFWILFNSCMPSLSETNLSIVFCILTTSSLTILNSSSIFSLLLVVCTSACFSSAIVSLSSFNVSLSFFLNSACSASMALRTVSILEN.

Helical transmembrane passes span 40–60 (LISLAAVFFCHSGMEALLSIV), 63–83 (LAFFHAGTALSSLLASLPFSF), 151–171 (LSETNLSIVFCILTTSSLTIL), and 176–196 (IFSLLLVVCTSACFSSAIVSL).

It localises to the membrane. This is an uncharacterized protein from Saccharomyces cerevisiae (strain ATCC 204508 / S288c) (Baker's yeast).